Consider the following 204-residue polypeptide: Urease accessory protein UreG (204 aa).

11–18 (GPVGAGKH) serves as a coordination point for GTP.

This sequence belongs to the SIMIBI class G3E GTPase family. UreG subfamily. In terms of assembly, homodimer. UreD, UreF and UreG form a complex that acts as a GTP-hydrolysis-dependent molecular chaperone, activating the urease apoprotein by helping to assemble the nickel containing metallocenter of UreC. The UreE protein probably delivers the nickel.

Its subcellular location is the cytoplasm. Its function is as follows. Facilitates the functional incorporation of the urease nickel metallocenter. This process requires GTP hydrolysis, probably effectuated by UreG. The chain is Urease accessory protein UreG from Staphylococcus xylosus.